The following is a 235-amino-acid chain: RNA-free ribonuclease P (235 aa).

Belongs to the HARP family.

The catalysed reaction is Endonucleolytic cleavage of RNA, removing 5'-extranucleotides from tRNA precursor.. RNA-free RNase P that catalyzes the removal of the 5'-leader sequence from pre-tRNA to produce the mature 5'-terminus. The polypeptide is RNA-free ribonuclease P (Methanothrix thermoacetophila (strain DSM 6194 / JCM 14653 / NBRC 101360 / PT) (Methanosaeta thermophila)).